Consider the following 547-residue polypeptide: Chaperonin GroEL (547 aa).

ATP is bound by residues 30-33 (TLGP), Lys-51, 87-91 (DGTTT), Gly-415, and Asp-496.

The protein belongs to the chaperonin (HSP60) family. In terms of assembly, forms a cylinder of 14 subunits composed of two heptameric rings stacked back-to-back. Interacts with the co-chaperonin GroES.

It localises to the cytoplasm. The enzyme catalyses ATP + H2O + a folded polypeptide = ADP + phosphate + an unfolded polypeptide.. Together with its co-chaperonin GroES, plays an essential role in assisting protein folding. The GroEL-GroES system forms a nano-cage that allows encapsulation of the non-native substrate proteins and provides a physical environment optimized to promote and accelerate protein folding. This Chlorobaculum parvum (strain DSM 263 / NCIMB 8327) (Chlorobium vibrioforme subsp. thiosulfatophilum) protein is Chaperonin GroEL.